A 388-amino-acid chain; its full sequence is GTPase Obg (388 aa).

One can recognise an Obg domain in the interval 1-159 (MKFVDEAVIR…RSLKLELLLL (159 aa)). The region spanning 160–333 (ADVGLLGMPN…LAAKLWDFIQ (174 aa)) is the OBG-type G domain. GTP is bound by residues 166–173 (GMPNAGKS), 191–195 (FTTLV), 213–216 (DIPG), 283–286 (NKAD), and 314–316 (SAY). The Mg(2+) site is built by serine 173 and threonine 193.

Belongs to the TRAFAC class OBG-HflX-like GTPase superfamily. OBG GTPase family. In terms of assembly, monomer. It depends on Mg(2+) as a cofactor.

It localises to the cytoplasm. In terms of biological role, an essential GTPase which binds GTP, GDP and possibly (p)ppGpp with moderate affinity, with high nucleotide exchange rates and a fairly low GTP hydrolysis rate. Plays a role in control of the cell cycle, stress response, ribosome biogenesis and in those bacteria that undergo differentiation, in morphogenesis control. The protein is GTPase Obg of Shewanella oneidensis (strain ATCC 700550 / JCM 31522 / CIP 106686 / LMG 19005 / NCIMB 14063 / MR-1).